Here is a 178-residue protein sequence, read N- to C-terminus: ATP synthase subunit delta (178 aa).

This sequence belongs to the ATPase delta chain family. As to quaternary structure, F-type ATPases have 2 components, F(1) - the catalytic core - and F(0) - the membrane proton channel. F(1) has five subunits: alpha(3), beta(3), gamma(1), delta(1), epsilon(1). F(0) has three main subunits: a(1), b(2) and c(10-14). The alpha and beta chains form an alternating ring which encloses part of the gamma chain. F(1) is attached to F(0) by a central stalk formed by the gamma and epsilon chains, while a peripheral stalk is formed by the delta and b chains.

It localises to the cell membrane. F(1)F(0) ATP synthase produces ATP from ADP in the presence of a proton or sodium gradient. F-type ATPases consist of two structural domains, F(1) containing the extramembraneous catalytic core and F(0) containing the membrane proton channel, linked together by a central stalk and a peripheral stalk. During catalysis, ATP synthesis in the catalytic domain of F(1) is coupled via a rotary mechanism of the central stalk subunits to proton translocation. Its function is as follows. This protein is part of the stalk that links CF(0) to CF(1). It either transmits conformational changes from CF(0) to CF(1) or is implicated in proton conduction. The sequence is that of ATP synthase subunit delta from Geobacillus sp. (strain WCH70).